The chain runs to 476 residues: Cysteine--tRNA ligase (476 aa).

Position 28 (C28) interacts with Zn(2+). Positions 30 to 40 match the 'HIGH' region motif; that stretch reads VTTYDFCHIGH. Residues C215, H241, and E245 each contribute to the Zn(2+) site. The short motif at 273–277 is the 'KMSKS' region element; the sequence is KMSKS. K276 contacts ATP.

This sequence belongs to the class-I aminoacyl-tRNA synthetase family. Monomer. Zn(2+) is required as a cofactor.

The protein resides in the cytoplasm. The catalysed reaction is tRNA(Cys) + L-cysteine + ATP = L-cysteinyl-tRNA(Cys) + AMP + diphosphate. The protein is Cysteine--tRNA ligase of Buchnera aphidicola subsp. Cinara cedri (strain Cc).